Consider the following 488-residue polypeptide: MTRVLFATSEVFPLVKTGGLADVSASLPEALCRLGYDCQILLPGYPAALKAAREAGSRRKTRFRYGQYDVSLWQTRLPGTAVTLWLVDCPALFDRAGDSPYQNEEGEDWWDNAHRFHLFGRIGAMLALGQLGLAWRPDIVHCNDWQSALIPVFLADSQDAPKTVFTIHNLAYQGLFSHETFRALGLPDSLWRYEFLEFHGQLSFIKGGLVFSDAITTVSPSYADEIQTPWFGNGLDGLLRHKSSRLHGILNGIDTRQWNPEADPHLEFHYGADYPANKSQCQARLQQELGLEVCGAPLLGFVGRLVEQKGLDWLLGVIKPLLERGCQFALLGSGEHHYQESLKAMVREWPGQCSLTLGYNEGLAHRITAGADIFLMPSRFEPCGLNQMYSLRYGTVPVVHGVGGLNDTVFDPNEETPEQANGFVFREATPDALHAAITRALAAREDRKTWRKLQENGMKGDYSWKNRAGEYAALYRNLIAGNDRIHED.

Lysine 16 contributes to the ADP-alpha-D-glucose binding site.

This sequence belongs to the glycosyltransferase 1 family. Bacterial/plant glycogen synthase subfamily.

The enzyme catalyses [(1-&gt;4)-alpha-D-glucosyl](n) + ADP-alpha-D-glucose = [(1-&gt;4)-alpha-D-glucosyl](n+1) + ADP + H(+). Its pathway is glycan biosynthesis; glycogen biosynthesis. In terms of biological role, synthesizes alpha-1,4-glucan chains using ADP-glucose. The protein is Glycogen synthase of Marinobacter nauticus (strain ATCC 700491 / DSM 11845 / VT8) (Marinobacter aquaeolei).